A 462-amino-acid chain; its full sequence is Cysteine--tRNA ligase (462 aa).

Zn(2+) is bound at residue cysteine 29. Residues 31–41 carry the 'HIGH' region motif; sequence PTVYDHAHIGN. 3 residues coordinate Zn(2+): cysteine 214, histidine 239, and glutamate 243. Residues 272-276 carry the 'KMSKS' region motif; the sequence is KMSKS. Residue lysine 275 participates in ATP binding.

It belongs to the class-I aminoacyl-tRNA synthetase family. Monomer. The cofactor is Zn(2+).

The protein localises to the cytoplasm. It carries out the reaction tRNA(Cys) + L-cysteine + ATP = L-cysteinyl-tRNA(Cys) + AMP + diphosphate. In Azorhizobium caulinodans (strain ATCC 43989 / DSM 5975 / JCM 20966 / LMG 6465 / NBRC 14845 / NCIMB 13405 / ORS 571), this protein is Cysteine--tRNA ligase.